Here is a 269-residue protein sequence, read N- to C-terminus: Formamidopyrimidine-DNA glycosylase (269 aa).

Residue Pro-2 is the Schiff-base intermediate with DNA of the active site. Glu-3 functions as the Proton donor in the catalytic mechanism. Lys-57 acts as the Proton donor; for beta-elimination activity in catalysis. The DNA site is built by His-90, Arg-109, and Lys-150. Residues 235–269 (QVYGRHGEPCYTCGEFIQIAKYGQRSSFFCPSCQN) form an FPG-type zinc finger. Residue Arg-259 is the Proton donor; for delta-elimination activity of the active site.

It belongs to the FPG family. In terms of assembly, monomer. Requires Zn(2+) as cofactor.

The enzyme catalyses Hydrolysis of DNA containing ring-opened 7-methylguanine residues, releasing 2,6-diamino-4-hydroxy-5-(N-methyl)formamidopyrimidine.. The catalysed reaction is 2'-deoxyribonucleotide-(2'-deoxyribose 5'-phosphate)-2'-deoxyribonucleotide-DNA = a 3'-end 2'-deoxyribonucleotide-(2,3-dehydro-2,3-deoxyribose 5'-phosphate)-DNA + a 5'-end 5'-phospho-2'-deoxyribonucleoside-DNA + H(+). Functionally, involved in base excision repair of DNA damaged by oxidation or by mutagenic agents. Acts as a DNA glycosylase that recognizes and removes damaged bases. Has a preference for oxidized purines, such as 7,8-dihydro-8-oxoguanine (8-oxoG). Has AP (apurinic/apyrimidinic) lyase activity and introduces nicks in the DNA strand. Cleaves the DNA backbone by beta-delta elimination to generate a single-strand break at the site of the removed base with both 3'- and 5'-phosphates. This is Formamidopyrimidine-DNA glycosylase from Baumannia cicadellinicola subsp. Homalodisca coagulata.